A 93-amino-acid chain; its full sequence is Acylphosphatase (93 aa).

The Acylphosphatase-like domain maps to 5 to 93; that stretch reads CIIAWVHGRV…EELTGFRIRY (89 aa). Active-site residues include arginine 20 and asparagine 38.

It belongs to the acylphosphatase family.

The catalysed reaction is an acyl phosphate + H2O = a carboxylate + phosphate + H(+). This chain is Acylphosphatase (acyP), found in Citrobacter koseri (strain ATCC BAA-895 / CDC 4225-83 / SGSC4696).